The primary structure comprises 1363 residues: Spike glycoprotein (1363 aa).

An N-terminal signal peptide occupies residues 1 to 13; that stretch reads MFLILLISLPMAL. The Extracellular portion of the chain corresponds to 14-1307; sequence AVIGDLKCTT…GTYEYYVKWP (1294 aa). Residues 15–298 enclose the BetaCoV S1-NTD domain; it reads VIGDLKCTTV…DFMSEIKCKT (284 aa). 5 disulfide bridges follow: Cys21–Cys165, Cys160–Cys193, Cys172–Cys252, Cys286–Cys296, and Cys331–Cys356. N-linked (GlcNAc...) asparagine; by host glycans are attached at residues Asn59 and Asn133. The N-linked (GlcNAc...) asparagine; by host glycan is linked to Asn198. In terms of domain architecture, BetaCoV S1-CTD spans 329 to 617; sequence PDCNIEAWLN…DVNSGTTCST (289 aa). Residue Asn359 is glycosylated (N-linked (GlcNAc...) asparagine; by host). 2 disulfides stabilise this stretch: Cys374/Cys427 and Cys386/Cys615. 7 N-linked (GlcNAc...) asparagine; by host glycosylation sites follow: Asn437, Asn649, Asn676, Asn696, Asn714, Asn739, and Asn788. 2 fusion peptide regions span residues 914-935 and 933-953; these read SAIE…VEAY and EAYN…VQSY. Asn937 is a glycosylation site (N-linked (GlcNAc...) asparagine; by host). Cys938 and Cys949 are disulfide-bonded. Residues 1014–1064 are heptad repeat 1; that stretch reads QKLIANAFNNALDAIQEGFDATNSALVKIQAVVNANAEALNNLLQQLSNRF. Positions 1043–1087 form a coiled coil; that stretch reads QAVVNANAEALNNLLQQLSNRFGAISSSLQEILSRLDALEAQRQI. N-linked (GlcNAc...) asparagine; by host glycans are attached at residues Asn1194, Asn1224, Asn1234, Asn1253, Asn1267, and Asn1288. The segment at 1258–1296 is heptad repeat 2; it reads APDLSLDYINVTFLDLQDEMNRLQEAIKLLNQSYINLKD. A coiled-coil region spans residues 1269–1297; it reads TFLDLQDEMNRLQEAIKLLNQSYINLKDI. Residues 1308–1328 form a helical membrane-spanning segment; the sequence is WYVWLLIGFAGVAMLVLLFFI. At 1329–1363 the chain is on the cytoplasmic side; sequence CCCTGCGTSCFKKCGGCCDDYTGHQELVIKTSHDD. Positions 1359–1363 match the KxHxx motif; it reads TSHDD.

It belongs to the betacoronaviruses spike protein family. As to quaternary structure, homotrimer; each monomer consists of a S1 and a S2 subunit. The resulting peplomers protrude from the virus surface as spikes. Specific enzymatic cleavages in vivo yield mature proteins. The precursor is processed into S1 and S2 by host cell furin or another cellular protease to yield the mature S1 and S2 proteins. Additionally, a second cleavage leads to the release of a fusion peptide after viral attachment to host cell receptor. In terms of processing, the cytoplasmic Cys-rich domain is palmitoylated. Spike glycoprotein is digested within host endosomes.

Its subcellular location is the virion membrane. The protein resides in the host endoplasmic reticulum-Golgi intermediate compartment membrane. It is found in the host cell membrane. Its function is as follows. Attaches the virion to the cell membrane by interacting with host receptor, initiating the infection. In terms of biological role, mediates fusion of the virion and cellular membranes by acting as a class I viral fusion protein. Under the current model, the protein has at least three conformational states: pre-fusion native state, pre-hairpin intermediate state, and post-fusion hairpin state. During viral and target cell membrane fusion, the coiled coil regions (heptad repeats) assume a trimer-of-hairpins structure, positioning the fusion peptide in close proximity to the C-terminal region of the ectodomain. The formation of this structure appears to drive apposition and subsequent fusion of viral and target cell membranes. Acts as a viral fusion peptide which is unmasked following S2 cleavage occurring upon virus endocytosis. The sequence is that of Spike glycoprotein from Bos taurus (Bovine).